A 150-amino-acid polypeptide reads, in one-letter code: Troponin C, isoform 2A (150 aa).

The residue at position 1 (methionine 1) is an N-acetylmethionine. 4 consecutive EF-hand domains span residues 7–42, 43–78, 83–118, and 119–150; these read EQIG…MGVK, ISEK…FLIE, ALKT…LDNR, and LTEE…MMNG. Aspartate 56, aspartate 58, serine 60, glutamate 62, and glutamate 67 together coordinate Ca(2+). Residues aspartate 132, aspartate 134, serine 136, threonine 138, and glutamate 143 each contribute to the Ca(2+) site.

Belongs to the troponin C family.

Troponin is the central regulatory protein of striated muscle contraction. Tn consists of three components: Tn-I which is the inhibitor of actomyosin ATPase, Tn-T which contains the binding site for tropomyosin and Tn-C. The binding of calcium to Tn-C abolishes the inhibitory action of Tn on actin filaments. In Homarus americanus (American lobster), this protein is Troponin C, isoform 2A.